The following is a 201-amino-acid chain: Phospholipase A2 inhibitor NAI (201 aa).

The signal sequence occupies residues 1–19 (MKSLQIICLLFVLVARGSC). Cystine bridges form between Cys22–Cys47, Cys25–Cys32, Cys40–Cys68, Cys74–Cys95, Cys96–Cys101, Cys119–Cys144, Cys137–Cys166, and Cys170–Cys191. An N-linked (GlcNAc...) asparagine glycan is attached at Asn176.

This sequence belongs to the CNF-like-inhibitor family. Heterotrimer of 2 subunits A and 1 subunit B; non-covalently linked. N-glycosylated, probably by biantennary structure. Glycosylation does not change PLA2 inhibitory activity. Expressed by the liver.

The protein resides in the secreted. Its function is as follows. Inhibits the enzymatic activity of all phospholipase A2 tested, binding them with micromole to nanomole affinity. The sequence is that of Phospholipase A2 inhibitor NAI from Notechis ater (Black tiger snake).